Here is a 105-residue protein sequence, read N- to C-terminus: Antimicrobial peptide 1 (105 aa).

The N-terminal stretch at 1–26 (METKRLAYVMFVLVCLFLAMAQPSQA) is a signal peptide. Intrachain disulfides connect C37/C93, C47/C105, and C49/C77.

Detected at higher levels in needles and twigs from canker-resistant seedlings than in needles from canker-susceptible plants. During summer, detected on cankered, healthy and marginal bark. During winter, detected at lower levels in cankered bark and bark from the canker margin than in healthy bark (at protein level).

The protein localises to the secreted. It localises to the cell wall. Antimicrobial peptide. The protein is Antimicrobial peptide 1 of Pinus monticola (Western white pine).